A 379-amino-acid polypeptide reads, in one-letter code: Mannan endo-1,4-beta-mannosidase 7 (379 aa).

Tryptophan 64 and asparagine 179 together coordinate substrate. Glutamate 180 acts as the Proton donor in catalysis. Tyrosine 260 lines the substrate pocket. Catalysis depends on glutamate 300, which acts as the Nucleophile. Tryptophan 342 contacts substrate.

Belongs to the glycosyl hydrolase 5 (cellulase A) family. As to expression, expression not detected.

The enzyme catalyses Random hydrolysis of (1-&gt;4)-beta-D-mannosidic linkages in mannans, galactomannans and glucomannans.. This chain is Mannan endo-1,4-beta-mannosidase 7 (MAN7), found in Oryza sativa subsp. japonica (Rice).